A 166-amino-acid chain; its full sequence is Cyclin-dependent kinase 4 inhibitor D (166 aa).

The residue at position 1 (methionine 1) is an N-acetylmethionine. ANK repeat units follow at residues 41 to 69 (FGKTALQVMMFGSTAIALELLKQGASPNV), 73 to 102 (SGTSPVHDAARTGFLDTLKVLVEHGADVNV), 106 to 135 (TGALPIHLAVQEGHTAVVSFLAAESDLHRR), and 138 to 166 (RGLTPLELALQRGAQDLVDILQGHMVAPL).

This sequence belongs to the CDKN2 cyclin-dependent kinase inhibitor family. As to quaternary structure, interacts with CDK6.

The protein localises to the nucleus. Its subcellular location is the cytoplasm. Functionally, interacts strongly with CDK4 and CDK6 and inhibits them. This is Cyclin-dependent kinase 4 inhibitor D (CDKN2D) from Homo sapiens (Human).